We begin with the raw amino-acid sequence, 350 residues long: Holliday junction branch migration complex subunit RuvB (350 aa).

Positions 1-182 are large ATPase domain (RuvB-L); that stretch reads MEDRIVTPLN…FGVLCPMDFY (182 aa). Residues leucine 21, arginine 22, glycine 63, lysine 66, threonine 67, threonine 68, 129–131, arginine 172, tyrosine 182, and arginine 219 contribute to the ATP site; that span reads EDY. Threonine 67 serves as a coordination point for Mg(2+). The small ATPAse domain (RuvB-S) stretch occupies residues 183–253; it reads DQEELSEIVV…TSKAALELLE (71 aa). The tract at residues 256–350 is head domain (RuvB-H); it reads KEGFDSIDNK…KQSSLFDGEV (95 aa). DNA-binding residues include arginine 311 and arginine 316.

Belongs to the RuvB family. In terms of assembly, homohexamer. Forms an RuvA(8)-RuvB(12)-Holliday junction (HJ) complex. HJ DNA is sandwiched between 2 RuvA tetramers; dsDNA enters through RuvA and exits via RuvB. An RuvB hexamer assembles on each DNA strand where it exits the tetramer. Each RuvB hexamer is contacted by two RuvA subunits (via domain III) on 2 adjacent RuvB subunits; this complex drives branch migration. In the full resolvosome a probable DNA-RuvA(4)-RuvB(12)-RuvC(2) complex forms which resolves the HJ.

The protein localises to the cytoplasm. The catalysed reaction is ATP + H2O = ADP + phosphate + H(+). Its function is as follows. The RuvA-RuvB-RuvC complex processes Holliday junction (HJ) DNA during genetic recombination and DNA repair, while the RuvA-RuvB complex plays an important role in the rescue of blocked DNA replication forks via replication fork reversal (RFR). RuvA specifically binds to HJ cruciform DNA, conferring on it an open structure. The RuvB hexamer acts as an ATP-dependent pump, pulling dsDNA into and through the RuvAB complex. RuvB forms 2 homohexamers on either side of HJ DNA bound by 1 or 2 RuvA tetramers; 4 subunits per hexamer contact DNA at a time. Coordinated motions by a converter formed by DNA-disengaged RuvB subunits stimulates ATP hydrolysis and nucleotide exchange. Immobilization of the converter enables RuvB to convert the ATP-contained energy into a lever motion, pulling 2 nucleotides of DNA out of the RuvA tetramer per ATP hydrolyzed, thus driving DNA branch migration. The RuvB motors rotate together with the DNA substrate, which together with the progressing nucleotide cycle form the mechanistic basis for DNA recombination by continuous HJ branch migration. Branch migration allows RuvC to scan DNA until it finds its consensus sequence, where it cleaves and resolves cruciform DNA. This chain is Holliday junction branch migration complex subunit RuvB, found in Clostridium kluyveri (strain NBRC 12016).